Reading from the N-terminus, the 135-residue chain is Ribosome-binding factor A (135 aa).

Residues valine 115–glutamate 135 form a disordered region. Positions asparagine 116–glutamate 135 are enriched in basic and acidic residues.

It belongs to the RbfA family. As to quaternary structure, monomer. Binds 30S ribosomal subunits, but not 50S ribosomal subunits or 70S ribosomes.

The protein localises to the cytoplasm. Functionally, one of several proteins that assist in the late maturation steps of the functional core of the 30S ribosomal subunit. Associates with free 30S ribosomal subunits (but not with 30S subunits that are part of 70S ribosomes or polysomes). Required for efficient processing of 16S rRNA. May interact with the 5'-terminal helix region of 16S rRNA. The sequence is that of Ribosome-binding factor A from Vibrio campbellii (strain ATCC BAA-1116).